The following is a 332-amino-acid chain: Phosphate acyltransferase (332 aa).

The protein belongs to the PlsX family. In terms of assembly, homodimer. Probably interacts with PlsY.

Its subcellular location is the cytoplasm. The catalysed reaction is a fatty acyl-[ACP] + phosphate = an acyl phosphate + holo-[ACP]. The protein operates within lipid metabolism; phospholipid metabolism. In terms of biological role, catalyzes the reversible formation of acyl-phosphate (acyl-PO(4)) from acyl-[acyl-carrier-protein] (acyl-ACP). This enzyme utilizes acyl-ACP as fatty acyl donor, but not acyl-CoA. The chain is Phosphate acyltransferase from Streptococcus sanguinis (strain SK36).